Reading from the N-terminus, the 34-residue chain is Photosystem II reaction center protein M (34 aa).

The helical transmembrane segment at 5-25 threads the bilayer; the sequence is ILGLIATALFIIIPTSFLLIL.

This sequence belongs to the PsbM family. As to quaternary structure, PSII is composed of 1 copy each of membrane proteins PsbA, PsbB, PsbC, PsbD, PsbE, PsbF, PsbH, PsbI, PsbJ, PsbK, PsbL, PsbM, PsbT, PsbX, PsbY, PsbZ, Psb30/Ycf12, at least 3 peripheral proteins of the oxygen-evolving complex and a large number of cofactors. It forms dimeric complexes.

It localises to the plastid. Its subcellular location is the chloroplast thylakoid membrane. In terms of biological role, one of the components of the core complex of photosystem II (PSII). PSII is a light-driven water:plastoquinone oxidoreductase that uses light energy to abstract electrons from H(2)O, generating O(2) and a proton gradient subsequently used for ATP formation. It consists of a core antenna complex that captures photons, and an electron transfer chain that converts photonic excitation into a charge separation. This subunit is found at the monomer-monomer interface. This chain is Photosystem II reaction center protein M, found in Nephroselmis olivacea (Green alga).